A 782-amino-acid chain; its full sequence is Vacuolar import and degradation protein 27 (782 aa).

A phosphoserine mark is found at Ser-170, Ser-195, and Ser-196. Positions 188 to 200 (DDDDELDSSSDDF) are enriched in acidic residues. Residues 188-215 (DDDDELDSSSDDFQDAKDTSFEHEKESE) form a disordered region. A compositionally biased stretch (basic and acidic residues) spans 201–215 (QDAKDTSFEHEKESE). Phosphoserine is present on Ser-222. Basic and acidic residues predominate over residues 372–384 (DDRSNEERDKESS). The disordered stretch occupies residues 372 to 422 (DDRSNEERDKESSESENDSEDEDDENDHSKRIISSEAFEEPRRATSKGNSS). Residues 385 to 397 (ESENDSEDEDDEN) are compositionally biased toward acidic residues. At Thr-486 the chain carries Phosphothreonine.

The protein belongs to the VID27 family.

Its subcellular location is the cytoplasm. Functionally, has a role in the negative regulation of gluconeogenesis. Required for vacuolar catabolite degradation of fructose-1,6-bisphosphatase (FBPase). The sequence is that of Vacuolar import and degradation protein 27 (VID27) from Saccharomyces cerevisiae (strain ATCC 204508 / S288c) (Baker's yeast).